The sequence spans 209 residues: Pyroglutamyl-peptidase 1 (209 aa).

Catalysis depends on residues E85, C149, and H168.

Belongs to the peptidase C15 family. As to quaternary structure, monomer.

Its subcellular location is the cytoplasm. The catalysed reaction is Release of an N-terminal pyroglutamyl group from a polypeptide, the second amino acid generally not being Pro.. In terms of biological role, removes 5-oxoproline from various penultimate amino acid residues except L-proline. The polypeptide is Pyroglutamyl-peptidase 1 (Pgpep1) (Mus musculus (Mouse)).